Here is a 325-residue protein sequence, read N- to C-terminus: Xylosidase/arabinosidase (325 aa).

Asp-16 functions as the Proton acceptor in the catalytic mechanism. Residue Glu-224 is the Proton donor of the active site.

The protein belongs to the glycosyl hydrolase 43 family.

It catalyses the reaction Hydrolysis of (1-&gt;4)-beta-D-xylans, to remove successive D-xylose residues from the non-reducing termini.. The enzyme catalyses Hydrolysis of terminal non-reducing alpha-L-arabinofuranoside residues in alpha-L-arabinosides.. This is Xylosidase/arabinosidase (xsa) from Bacteroides ovatus.